Here is a 492-residue protein sequence, read N- to C-terminus: Glutamyl-tRNA(Gln) amidotransferase subunit A (492 aa).

Catalysis depends on charge relay system residues K78 and S158. S182 acts as the Acyl-ester intermediate in catalysis.

This sequence belongs to the amidase family. GatA subfamily. In terms of assembly, heterotrimer of A, B and C subunits.

It catalyses the reaction L-glutamyl-tRNA(Gln) + L-glutamine + ATP + H2O = L-glutaminyl-tRNA(Gln) + L-glutamate + ADP + phosphate + H(+). Functionally, allows the formation of correctly charged Gln-tRNA(Gln) through the transamidation of misacylated Glu-tRNA(Gln) in organisms which lack glutaminyl-tRNA synthetase. The reaction takes place in the presence of glutamine and ATP through an activated gamma-phospho-Glu-tRNA(Gln). In Rhodopseudomonas palustris (strain HaA2), this protein is Glutamyl-tRNA(Gln) amidotransferase subunit A.